Here is a 577-residue protein sequence, read N- to C-terminus: Moesin (577 aa).

The 294-residue stretch at 2 to 295 (PKTISVRVTT…GNHELYMRRR (294 aa)) folds into the FERM domain. A Phosphoserine modification is found at Ser74. N6-acetyllysine is present on Lys79. Lys83 is modified (N6-succinyllysine). Positions 115-120 (IYCPPE) match the [IL]-x-C-x-x-[DE] motif motif. Tyr116 is modified (phosphotyrosine). Cys117 carries the S-nitrosocysteine modification. Residues Lys139 and Lys165 each carry the N6-acetyllysine modification. Disordered stretches follow at residues 323-342 (LENE…KIER), 375-409 (LEQE…ASRD), and 466-518 (AMST…NERV). Residues 375-401 (LEQERKRAQSEAEKLAKERQEAEEAKE) are compositionally biased toward basic and acidic residues. A Phosphoserine modification is found at Ser407. Residues 476-487 (AENEQDEQDENG) show a composition bias toward acidic residues. Residues 492 to 518 (ADLRADAMAKDRSEEERTTEAEKNERV) are compositionally biased toward basic and acidic residues. At Ser527 the chain carries Phosphoserine. Position 558 is a phosphothreonine; by ROCK2 and STK10 (Thr558).

As to quaternary structure, in resting T-cells, part of a PAG1-NHERF1-MSN complex which is disrupted upon TCR activation. Interacts with NHERF1. Interacts with PPP1R16B. Interacts with SELPLG and SYK; these interactions mediate the activation of SYK by SELPLG. Interacts with PDPN (via cytoplasmic domain); this interaction activates RHOA and promotes epithelial-mesenchymal transition. Interacts with SPN/CD43 cytoplasmic tail. Interacts with CD44. Interacts with ICAM2. Interacts with ICAM3 (via C-terminus). Interacts with PDZD8. Interacts with F-actin. Interacts with CD46. Interacts with PTPN6. (Microbial infection) Interacts with HIV-1 envelope protein gp120. In terms of processing, phosphorylation on Thr-558 is crucial for the formation of microvilli-like structures. Phosphorylation by ROCK2 suppresses the head-to-tail association of the N-terminal and C-terminal halves resulting in an opened conformation which is capable of actin and membrane-binding. Phosphorylation on Thr-558 by STK10 negatively regulates lymphocyte migration and polarization. S-nitrosylation of Cys-117 is induced by interferon-gamma and oxidatively-modified low-densitity lipoprotein (LDL(ox)) implicating the iNOS-S100A8/9 transnitrosylase complex. In terms of tissue distribution, in all tissues and cultured cells studied.

It is found in the cell membrane. It localises to the cytoplasm. The protein localises to the cytoskeleton. The protein resides in the apical cell membrane. Its subcellular location is the cell projection. It is found in the microvillus membrane. It localises to the microvillus. A head-to-tail association, of the N-terminal and C-terminal halves results in a closed conformation (inactive form) which is incapable of actin or membrane-binding. Ezrin-radixin-moesin (ERM) family protein that connects the actin cytoskeleton to the plasma membrane and thereby regulates the structure and function of specific domains of the cell cortex. Tethers actin filaments by oscillating between a resting and an activated state providing transient interactions between moesin and the actin cytoskeleton. Once phosphorylated on its C-terminal threonine, moesin is activated leading to interaction with F-actin and cytoskeletal rearrangement. These rearrangements regulate many cellular processes, including cell shape determination, membrane transport, and signal transduction. The role of moesin is particularly important in immunity acting on both T and B-cells homeostasis and self-tolerance, regulating lymphocyte egress from lymphoid organs. Modulates phagolysosomal biogenesis in macrophages. Also participates in immunologic synapse formation. This chain is Moesin, found in Homo sapiens (Human).